A 351-amino-acid chain; its full sequence is Chorismate synthase (351 aa).

Positions 39–60 (EDIQRDLERRRPGKRLTSPRGE) are disordered. 2 residues coordinate NADP(+): Arg48 and Arg53. FMN contacts are provided by residues 124–126 (RSS), Ala276, 291–295 (KPIPS), and Arg317.

It belongs to the chorismate synthase family. As to quaternary structure, homotetramer. FMNH2 serves as cofactor.

It carries out the reaction 5-O-(1-carboxyvinyl)-3-phosphoshikimate = chorismate + phosphate. Its pathway is metabolic intermediate biosynthesis; chorismate biosynthesis; chorismate from D-erythrose 4-phosphate and phosphoenolpyruvate: step 7/7. Functionally, catalyzes the anti-1,4-elimination of the C-3 phosphate and the C-6 proR hydrogen from 5-enolpyruvylshikimate-3-phosphate (EPSP) to yield chorismate, which is the branch point compound that serves as the starting substrate for the three terminal pathways of aromatic amino acid biosynthesis. This reaction introduces a second double bond into the aromatic ring system. This chain is Chorismate synthase, found in Syntrophobacter fumaroxidans (strain DSM 10017 / MPOB).